Here is a 368-residue protein sequence, read N- to C-terminus: F-box only protein 28 (368 aa).

Residues 1 to 11 (MAAASEERMAE) are compositionally biased toward basic and acidic residues. The interval 1–56 (MAAASEERMAEEGGGGHGDGGSCSAAGSAQRQPPAPPSQAPPPGSQAPAAPALAPD) is disordered. A compositionally biased stretch (gly residues) spans 12–21 (EGGGGHGDGG). A compositionally biased stretch (low complexity) spans 22–32 (SCSAAGSAQRQ). Residues 33 to 45 (PPAPPSQAPPPGS) are compositionally biased toward pro residues. Residues 46-55 (QAPAAPALAP) are compositionally biased toward low complexity. The F-box domain occupies 61–109 (NNTLVALPIVAIENILSFMSYDEISQLRLVCKRMDLVCQRMLNQGFLKV). S235 and S242 each carry phosphoserine. Phosphothreonine is present on T270. Residues 328 to 368 (MESAVGTSSGSGQSEESPRKRRKATEAIDSLRKSKRLRNRK) are disordered. The residue at position 344 (S344) is a Phosphoserine.

In terms of assembly, part of a SCF (SKP1-cullin-F-box) protein ligase complex.

The protein resides in the chromosome. It localises to the centromere. It is found in the kinetochore. In terms of biological role, probably recognizes and binds to some phosphorylated proteins and promotes their ubiquitination and degradation. The chain is F-box only protein 28 (Fbxo28) from Mus musculus (Mouse).